The chain runs to 110 residues: UPF0122 protein gbs1018 (110 aa).

Belongs to the UPF0122 family.

In terms of biological role, might take part in the signal recognition particle (SRP) pathway. This is inferred from the conservation of its genetic proximity to ftsY/ffh. May be a regulatory protein. The chain is UPF0122 protein gbs1018 from Streptococcus agalactiae serotype III (strain NEM316).